A 582-amino-acid polypeptide reads, in one-letter code: Two-component response regulator ORR26 (582 aa).

One can recognise a Response regulatory domain in the interval 11-126 (RVLVVDDDPT…ELRNIWQHVY (116 aa)). Residue Asp-62 is modified to 4-aspartylphosphate. Positions 166 to 182 (SDTMRKRKDVDKDHADQ) are enriched in basic and acidic residues. The segment at 166–187 (SDTMRKRKDVDKDHADQESSDG) is disordered. Residues 189–248 (TVKKARVVWSVDLHQKFVNAVNQIGFDKVGPKKILDLMNVPGLTRENVASHLQKYRLYLS) constitute a DNA-binding region (myb-like GARP).

It belongs to the ARR family. Type-B subfamily. Post-translationally, two-component system major event consists of a His-to-Asp phosphorelay between a sensor histidine kinase (HK) and a response regulator (RR). In plants, the His-to-Asp phosphorelay involves an additional intermediate named Histidine-containing phosphotransfer protein (HPt). This multistep phosphorelay consists of a His-Asp-His-Asp sequential transfer of a phosphate group between first a His and an Asp of the HK protein, followed by the transfer to a conserved His of the HPt protein and finally the transfer to an Asp in the receiver domain of the RR protein.

Its subcellular location is the nucleus. Its function is as follows. Transcriptional activator that binds specific DNA sequence. Functions as a response regulator involved in His-to-Asp phosphorelay signal transduction system. Phosphorylation of the Asp residue in the receiver domain activates the ability of the protein to promote the transcription of target genes. May directly activate some type-A response regulators in response to cytokinins. In Oryza sativa subsp. japonica (Rice), this protein is Two-component response regulator ORR26.